A 207-amino-acid polypeptide reads, in one-letter code: Recombination protein RecR (207 aa).

Residues 60–75 (CRRCHNISDSGVCTIC) form a C4-type zinc finger. The Toprim domain maps to 83–178 (STLCVVENIR…RVSVIARGIA (96 aa)).

The protein belongs to the RecR family.

May play a role in DNA repair. It seems to be involved in an RecBC-independent recombinational process of DNA repair. It may act with RecF and RecO. This chain is Recombination protein RecR, found in Porphyromonas gingivalis (strain ATCC 33277 / DSM 20709 / CIP 103683 / JCM 12257 / NCTC 11834 / 2561).